The chain runs to 226 residues: Ribonuclease 3 (226 aa).

Residues 7–129 enclose the RNase III domain; that stretch reads LPRLCRTLGY…IIGAIYLDSD (123 aa). E42 is a Mg(2+) binding site. The active site involves D46. Mg(2+) contacts are provided by D115 and E118. Residue E118 is part of the active site. One can recognise a DRBM domain in the interval 156-226; sequence DAKTLLQEYL…AAQVLELLKK (71 aa).

It belongs to the ribonuclease III family. In terms of assembly, homodimer. Mg(2+) serves as cofactor.

It is found in the cytoplasm. It catalyses the reaction Endonucleolytic cleavage to 5'-phosphomonoester.. In terms of biological role, digests double-stranded RNA. Involved in the processing of primary rRNA transcript to yield the immediate precursors to the large and small rRNAs (23S and 16S). Processes some mRNAs, and tRNAs when they are encoded in the rRNA operon. Processes pre-crRNA and tracrRNA of type II CRISPR loci if present in the organism. The chain is Ribonuclease 3 from Shewanella oneidensis (strain ATCC 700550 / JCM 31522 / CIP 106686 / LMG 19005 / NCIMB 14063 / MR-1).